Reading from the N-terminus, the 179-residue chain is Protein GrpE (179 aa).

A disordered region spans residues 1 to 45 (MSEEKLTQDPTAEEEQTETADQQESADVNWEQEAAHWKAQAEEHQ). The segment covering 33–45 (EAAHWKAQAEEHQ) has biased composition (basic and acidic residues).

This sequence belongs to the GrpE family. In terms of assembly, homodimer.

The protein resides in the cytoplasm. Functionally, participates actively in the response to hyperosmotic and heat shock by preventing the aggregation of stress-denatured proteins, in association with DnaK and GrpE. It is the nucleotide exchange factor for DnaK and may function as a thermosensor. Unfolded proteins bind initially to DnaJ; upon interaction with the DnaJ-bound protein, DnaK hydrolyzes its bound ATP, resulting in the formation of a stable complex. GrpE releases ADP from DnaK; ATP binding to DnaK triggers the release of the substrate protein, thus completing the reaction cycle. Several rounds of ATP-dependent interactions between DnaJ, DnaK and GrpE are required for fully efficient folding. This is Protein GrpE from Brevibacillus choshinensis.